A 401-amino-acid polypeptide reads, in one-letter code: Riboflavin biosynthesis protein RibBA (401 aa).

Residues 1–203 (MTDFQFSKVE…IQQLQEYRRK (203 aa)) form a DHBP synthase region. Residues 30 to 31 (RE), Asp35, 142 to 146 (RNGHT), and Glu166 contribute to the D-ribulose 5-phosphate site. Glu31 serves as a coordination point for Mg(2+). Residue His145 coordinates Mg(2+). The tract at residues 204–401 (HDSLVKQISV…QIKMGHMFNF (198 aa)) is GTP cyclohydrolase II. Position 254–258 (254–258 (RIHSE)) interacts with GTP. Residues Cys259, Cys270, and Cys272 each contribute to the Zn(2+) site. Residues Gln275, 297-299 (EGR), and Thr319 contribute to the GTP site. Asp331 serves as the catalytic Proton acceptor; for GTP cyclohydrolase activity. Arg333 acts as the Nucleophile; for GTP cyclohydrolase activity in catalysis. The GTP site is built by Thr354 and Lys359.

In the N-terminal section; belongs to the DHBP synthase family. This sequence in the C-terminal section; belongs to the GTP cyclohydrolase II family. It depends on Mg(2+) as a cofactor. The cofactor is Mn(2+). Requires Zn(2+) as cofactor.

The catalysed reaction is D-ribulose 5-phosphate = (2S)-2-hydroxy-3-oxobutyl phosphate + formate + H(+). It carries out the reaction GTP + 4 H2O = 2,5-diamino-6-hydroxy-4-(5-phosphoribosylamino)-pyrimidine + formate + 2 phosphate + 3 H(+). The protein operates within cofactor biosynthesis; riboflavin biosynthesis; 2-hydroxy-3-oxobutyl phosphate from D-ribulose 5-phosphate: step 1/1. It functions in the pathway cofactor biosynthesis; riboflavin biosynthesis; 5-amino-6-(D-ribitylamino)uracil from GTP: step 1/4. In terms of biological role, catalyzes the conversion of D-ribulose 5-phosphate to formate and 3,4-dihydroxy-2-butanone 4-phosphate. Its function is as follows. Catalyzes the conversion of GTP to 2,5-diamino-6-ribosylamino-4(3H)-pyrimidinone 5'-phosphate (DARP), formate and pyrophosphate. The polypeptide is Riboflavin biosynthesis protein RibBA (Actinobacillus pleuropneumoniae serotype 7 (strain AP76)).